The sequence spans 333 residues: Glycerol-3-phosphate dehydrogenase [NAD(P)+] 2 (333 aa).

Positions 12, 13, 32, and 106 each coordinate NADPH. Lys106 and Gly134 together coordinate sn-glycerol 3-phosphate. Ala138 provides a ligand contact to NADPH. Lys189, Asp242, Ser252, Arg253, and Asn254 together coordinate sn-glycerol 3-phosphate. The Proton acceptor role is filled by Lys189. Arg253 provides a ligand contact to NADPH. Residues Val277 and Glu279 each contribute to the NADPH site.

It belongs to the NAD-dependent glycerol-3-phosphate dehydrogenase family.

It localises to the cytoplasm. The enzyme catalyses sn-glycerol 3-phosphate + NAD(+) = dihydroxyacetone phosphate + NADH + H(+). It catalyses the reaction sn-glycerol 3-phosphate + NADP(+) = dihydroxyacetone phosphate + NADPH + H(+). Its pathway is membrane lipid metabolism; glycerophospholipid metabolism. Catalyzes the reduction of the glycolytic intermediate dihydroxyacetone phosphate (DHAP) to sn-glycerol 3-phosphate (G3P), the key precursor for phospholipid synthesis. The polypeptide is Glycerol-3-phosphate dehydrogenase [NAD(P)+] 2 (Sphingopyxis alaskensis (strain DSM 13593 / LMG 18877 / RB2256) (Sphingomonas alaskensis)).